A 454-amino-acid polypeptide reads, in one-letter code: Mitochondrial distribution and morphology protein 10 (454 aa).

Belongs to the MDM10 family. Component of the ER-mitochondria encounter structure (ERMES) or MDM complex, composed of MMM1, MDM10, MDM12 and MDM34. Associates with the mitochondrial outer membrane sorting assembly machinery SAM(core) complex.

Its subcellular location is the mitochondrion outer membrane. Component of the ERMES/MDM complex, which serves as a molecular tether to connect the endoplasmic reticulum and mitochondria. Components of this complex are involved in the control of mitochondrial shape and protein biogenesis and may function in phospholipid exchange. MDM10 is involved in the late assembly steps of the general translocase of the mitochondrial outer membrane (TOM complex). Functions in the TOM40-specific route of the assembly of outer membrane beta-barrel proteins, including the association of TOM40 with the receptor TOM22 and small TOM proteins. Can associate with the SAM(core) complex as well as the MDM12-MMM1 complex, both involved in late steps of the major beta-barrel assembly pathway, that is responsible for biogenesis of all outer membrane beta-barrel proteins. May act as a switch that shuttles between both complexes and channels precursor proteins into the TOM40-specific pathway. Plays a role in mitochondrial morphology and in the inheritance of mitochondria. This chain is Mitochondrial distribution and morphology protein 10, found in Candida tropicalis (strain ATCC MYA-3404 / T1) (Yeast).